The sequence spans 37 residues: U10-ctenitoxin-Co1a (37 aa).

4 cysteine pairs are disulfide-bonded: Cys-2-Cys-17, Cys-9-Cys-22, Cys-16-Cys-33, and Cys-24-Cys-31.

In terms of tissue distribution, expressed by the venom gland.

Its subcellular location is the secreted. Its function is as follows. Antagonist of L-type calcium channels (Cav1/CACNA1). This Ctenus ornatus (Brazilian spider) protein is U10-ctenitoxin-Co1a.